We begin with the raw amino-acid sequence, 107 residues long: Putative double-stranded DNA mimic protein ETA_15890 (107 aa).

Belongs to the putative dsDNA mimic protein family.

May act as a double-stranded DNA (dsDNA) mimic. Probably regulates the activity of a dsDNA-binding protein. This is Putative double-stranded DNA mimic protein ETA_15890 from Erwinia tasmaniensis (strain DSM 17950 / CFBP 7177 / CIP 109463 / NCPPB 4357 / Et1/99).